A 613-amino-acid polypeptide reads, in one-letter code: MQCMAVHQFAPLLSLLNCSRISSDFGRLFTPKTSTKSRSSTCHPIQCTVVNNTDRRSANYEPSIWSFDYIQSLTSQYKGKSYSSRLNELKKEVKMMEDGTKECLAQLDLIDTLQRLGISYHFEDEINTILKRKYINIQNNINHNYNLYSTALQFRLLRQHGYLVTQEVFNAFKDETGKFKTYLSDDIMGVLSLYEASFYAMKHENVLEEARVFSTECLKEYMMKMEQNKVLLDHDLDHNDNFNVNHHVLIINHALELPLHWRITRSEARWFIDVYEKKQDMDSTLLEFAKLDFNMVQSTHQEDLKHLSRWWRHSKLGEKLNFARDRLMEAFLWEVGLKFEPEFSYFKRISARLFVLITIIDDIYDVYGTLEELELFTKAVERWDVNAINELPEYMKMPFLVLHNTINEMAFDVLGDQNFLNIEYLKKSLVDLCKCYLQEAKWYYSGYQPTLQEYIEMAWLSIGGPVILVHAYFCFTNPITKESMKFFTEGYPNIIQQSCLIVRLADDFGTFSDELNRGDVPKSIQCYMYDTGASEDEAREHIKFLICETWKDMNKNDEDNSCFSETFVEVCKNLARTALFMYQYGDGHASQNCLSKERIFALIINPINFHERK.

A chloroplast-targeting transit peptide spans 1-46 (MQCMAVHQFAPLLSLLNCSRISSDFGRLFTPKTSTKSRSSTCHPIQ). R324, D361, and D365 together coordinate (2E)-geranyl diphosphate. 2 residues coordinate Mg(2+): D361 and D365. A DDXXD motif motif is present at residues 361 to 365 (DDIYD). The helical transmembrane segment at 455 to 475 (IEMAWLSIGGPVILVHAYFCF) threads the bilayer. R503 and D506 together coordinate (2E)-geranyl diphosphate. Residues D506, T510, and E514 each coordinate Mg(2+).

Belongs to the terpene synthase family. Tpsb subfamily. It depends on Mg(2+) as a cofactor. Requires Mn(2+) as cofactor. Expressed in trichomes.

It is found in the plastid. The protein localises to the chloroplast membrane. The enzyme catalyses (2E)-geranyl diphosphate = beta-myrcene + diphosphate. It participates in secondary metabolite biosynthesis; terpenoid biosynthesis. Its function is as follows. Monoterpene synthase that catalyzes the formation of myrcene. Can use geranyl diphosphate as substrate, but not farnesyl diphosphate or geranylgeranyl diphosphate. The polypeptide is Myrcene synthase, chloroplastic (Humulus lupulus (European hop)).